The sequence spans 485 residues: Protein DETOXIFICATION 8 (485 aa).

Positions 1-26 (MENGFSLVPKEEEEEEDYSNEKSEDQ) are disordered. 12 helical membrane-spanning segments follow: residues 41 to 61 (FMAA…VISI), 74 to 94 (AVAI…FGLA), 118 to 138 (YGSM…WVFM), 159 to 179 (SIWL…TRFF), 188 to 208 (LFLS…LLVY), 212 to 232 (FGIV…VGLL), 263 to 283 (LAIP…LLIL), 297 to 317 (VLSI…AIGA), 338 to 358 (AANS…ISLY), 381 to 401 (ITPF…LSGV), 414 to 434 (ANIG…CFVV), and 442 to 462 (WIGI…VTFF).

The protein belongs to the multi antimicrobial extrusion (MATE) (TC 2.A.66.1) family.

It is found in the membrane. This Arabidopsis thaliana (Mouse-ear cress) protein is Protein DETOXIFICATION 8.